We begin with the raw amino-acid sequence, 156 residues long: Transcription inhibitor protein Gfh1 (156 aa).

Residues 1 to 74 (MAREVKLTKA…LEDILSRAVI (74 aa)) are a coiled coil.

It belongs to the GreA/GreB family. Interacts with RNAP.

In terms of biological role, inhibits all catalytic activities of RNA polymerase (RNAP) by partially occluding its substrate-binding site and preventing NTP binding. The polypeptide is Transcription inhibitor protein Gfh1 (gfh1) (Thermus thermophilus (strain ATCC BAA-163 / DSM 7039 / HB27)).